We begin with the raw amino-acid sequence, 124 residues long: Fluoride-specific ion channel FluC (124 aa).

4 consecutive transmembrane segments (helical) span residues 4–24 (LLLV…ISIF), 35–55 (FGTL…YALG), 60–80 (ISPE…TTFS), and 102–122 (VVLN…LVFS). Residues glycine 74 and threonine 77 each contribute to the Na(+) site.

It belongs to the fluoride channel Fluc/FEX (TC 1.A.43) family.

The protein localises to the cell inner membrane. It catalyses the reaction fluoride(in) = fluoride(out). Na(+) is not transported, but it plays an essential structural role and its presence is essential for fluoride channel function. Fluoride-specific ion channel. Important for reducing fluoride concentration in the cell, thus reducing its toxicity. The chain is Fluoride-specific ion channel FluC from Shewanella oneidensis (strain ATCC 700550 / JCM 31522 / CIP 106686 / LMG 19005 / NCIMB 14063 / MR-1).